Reading from the N-terminus, the 245-residue chain is 1-(5-phosphoribosyl)-5-[(5-phosphoribosylamino)methylideneamino] imidazole-4-carboxamide isomerase (245 aa).

Asp-8 serves as the catalytic Proton acceptor. The Proton donor role is filled by Asp-131.

This sequence belongs to the HisA/HisF family.

The protein resides in the cytoplasm. The catalysed reaction is 1-(5-phospho-beta-D-ribosyl)-5-[(5-phospho-beta-D-ribosylamino)methylideneamino]imidazole-4-carboxamide = 5-[(5-phospho-1-deoxy-D-ribulos-1-ylimino)methylamino]-1-(5-phospho-beta-D-ribosyl)imidazole-4-carboxamide. Its pathway is amino-acid biosynthesis; L-histidine biosynthesis; L-histidine from 5-phospho-alpha-D-ribose 1-diphosphate: step 4/9. The sequence is that of 1-(5-phosphoribosyl)-5-[(5-phosphoribosylamino)methylideneamino] imidazole-4-carboxamide isomerase from Neisseria gonorrhoeae (strain ATCC 700825 / FA 1090).